The sequence spans 102 residues: Small ribosomal subunit protein uS10 (102 aa).

This sequence belongs to the universal ribosomal protein uS10 family. As to quaternary structure, part of the 30S ribosomal subunit.

In terms of biological role, involved in the binding of tRNA to the ribosomes. This is Small ribosomal subunit protein uS10 from Latilactobacillus sakei subsp. sakei (strain 23K) (Lactobacillus sakei subsp. sakei).